Here is a 343-residue protein sequence, read N- to C-terminus: Geranylgeranyl pyrophosphate synthase (343 aa).

Residues 1–12 show a composition bias toward basic and acidic residues; that stretch reads MAYTVEPREHSK. Residues 1–26 form a disordered region; the sequence is MAYTVEPREHSKNTTLPTVAMPPSPP. Lysine 69, arginine 72, and histidine 101 together coordinate isopentenyl diphosphate. Residues aspartate 108 and aspartate 112 each contribute to the Mg(2+) site. Arginine 117 contributes to the dimethylallyl diphosphate binding site. Arginine 118 contacts isopentenyl diphosphate. Residues threonine 196 and glutamine 229 each contribute to the dimethylallyl diphosphate site. Residue aspartate 232 participates in Mg(2+) binding. Dimethylallyl diphosphate contacts are provided by asparagine 236, lysine 246, and lysine 256.

Belongs to the FPP/GGPP synthase family. Requires Mg(2+) as cofactor.

The enzyme catalyses isopentenyl diphosphate + dimethylallyl diphosphate = (2E)-geranyl diphosphate + diphosphate. It catalyses the reaction isopentenyl diphosphate + (2E)-geranyl diphosphate = (2E,6E)-farnesyl diphosphate + diphosphate. It carries out the reaction isopentenyl diphosphate + (2E,6E)-farnesyl diphosphate = (2E,6E,10E)-geranylgeranyl diphosphate + diphosphate. It participates in mycotoxin biosynthesis. Geranylgeranyl pyrophosphate synthase; part of the gene cluster that mediates the biosynthesis of aphidicolin, a specific inhibitor of eukaryotic DNA synthesis and DNA polymerase alpha. The geranylgeranyl pyrophosphate synthase GGS is required for supplying a sufficient amount of geranylgeranyl diphosphate (GGDP), the general precursor of diterpenes. The diterpene synthase ACS then catalyzes the conversion of geranylgeranyl diphosphate to aphidicolan-16-beta-ol via the intermediate syn-copalyldiphosphate (syn-CDP). In addition to aphidicolan-16-beta-ol, the enzyme also produces low levels of amphidicol-15-ene and amphidicol-16-ene. The cytochrome P450 monooxygenase P450-2 then catalyzes the two-step hydroxylation from aphidicolan-16-beta-ol to 3-deoxyaphidicolin via a 17,3-deoxyaphidicolin intermediate. Finally, the cytochrome P450 monooxygenase P450-1 converts 3-deoxyaphidicolin to aphidicolin. This Neocamarosporium betae (Beet black rot fungus) protein is Geranylgeranyl pyrophosphate synthase (GGS).